Reading from the N-terminus, the 413-residue chain is MNIYAVGGAIRDELLGVPVQDRDYVVVGATPEQMTAQGFRPVGKDFPVFLHPQTQEEYALARTERKTAAGYHGFQFHYAPDVTLDEDLARRDLTINAMAREVSPEGTLVGPVIDPFDGQADLRARVFRHVSDAFVEDPVRILRIARFAARFADFTVADETLALMRRMVDAGEVDALVPERVWQEIARGLMEAKPSRMFAVLRDCGALARILPEVDALWGVPQRADYHPEVDTGVHVMMVVDYAAKQGYSLAVRFAALTHDLGKGTTPADVLPRHVGHESRSVELLKPLCERLRVPNECRDLALVVAREHGNLHRVMEMGAAALVRLFERSDALRKPARFAELLQACESDARGRLGLDAQPYPQAERLRVALAAARSVDAGAIARGIGSDTEKIKEAVHRARIQAVAQALAIGE.

ATP is bound by residues G8 and R11. CTP contacts are provided by G8 and R11. Residues D21 and D23 each coordinate Mg(2+). ATP-binding residues include R91, R143, and R146. Residues R91, R143, and R146 each coordinate CTP. Residues 232 to 333 enclose the HD domain; sequence TGVHVMMVVD…VRLFERSDAL (102 aa).

This sequence belongs to the tRNA nucleotidyltransferase/poly(A) polymerase family. Bacterial CCA-adding enzyme type 1 subfamily. In terms of assembly, monomer. Can also form homodimers and oligomers. The cofactor is Mg(2+). Requires Ni(2+) as cofactor.

It catalyses the reaction a tRNA precursor + 2 CTP + ATP = a tRNA with a 3' CCA end + 3 diphosphate. The enzyme catalyses a tRNA with a 3' CCA end + 2 CTP + ATP = a tRNA with a 3' CCACCA end + 3 diphosphate. In terms of biological role, catalyzes the addition and repair of the essential 3'-terminal CCA sequence in tRNAs without using a nucleic acid template. Adds these three nucleotides in the order of C, C, and A to the tRNA nucleotide-73, using CTP and ATP as substrates and producing inorganic pyrophosphate. tRNA 3'-terminal CCA addition is required both for tRNA processing and repair. Also involved in tRNA surveillance by mediating tandem CCA addition to generate a CCACCA at the 3' terminus of unstable tRNAs. While stable tRNAs receive only 3'-terminal CCA, unstable tRNAs are marked with CCACCA and rapidly degraded. The sequence is that of Multifunctional CCA protein from Burkholderia cenocepacia (strain ATCC BAA-245 / DSM 16553 / LMG 16656 / NCTC 13227 / J2315 / CF5610) (Burkholderia cepacia (strain J2315)).